A 165-amino-acid chain; its full sequence is MPPKFDPNEIKVVYLRCTGGEVGATSALAPKIGPLGLSPKKVGDDIAKATGDWKGLRITVKLTIQNRQAQIEVVPSASALIIKALKEPPRDRKKQKNIKHSGNITFDEIVNIARQMRHRSLARELSGTIKEILGTAQSVGCNVDNRHPHDIIDDINNGVVECPAS.

The residue at position 38 (S38) is a Phosphoserine. K40 is covalently cross-linked (Glycyl lysine isopeptide (Lys-Gly) (interchain with G-Cter in SUMO2)). Residue K48 forms a Glycyl lysine isopeptide (Lys-Gly) (interchain with G-Cter in ubiquitin) linkage. Residue K54 is modified to N6-acetyllysine. A Glycyl lysine isopeptide (Lys-Gly) (interchain with G-Cter in ubiquitin) cross-link involves residue K83. Position 165 is a phosphoserine (S165).

It belongs to the universal ribosomal protein uL11 family. As to quaternary structure, component of the large ribosomal subunit. Mature ribosomes consist of a small (40S) and a large (60S) subunit. The 40S subunit contains about 33 different proteins and 1 molecule of RNA (18S). The 60S subunit contains about 49 different proteins and 3 molecules of RNA (28S, 5.8S and 5S). In terms of processing, ubiquitinated at Lys-48 and Lys-83 by RNF14 and RNF25 in response to ribosome collisions (ribosome stalling).

It is found in the cytoplasm. Its function is as follows. Component of the large ribosomal subunit. The ribosome is a large ribonucleoprotein complex responsible for the synthesis of proteins in the cell. Binds directly to 26S ribosomal RNA. The chain is Large ribosomal subunit protein uL11 (RPL12) from Chinchilla lanigera (Long-tailed chinchilla).